Consider the following 282-residue polypeptide: Biotin synthase (282 aa).

The Radical SAM core domain maps to 1–228; that stretch reads MQEIFLCSIS…NARLMVAGGR (228 aa). 3 residues coordinate [4Fe-4S] cluster: Cys-17, Cys-21, and Cys-24. [2Fe-2S] cluster is bound by residues Cys-61, Cys-96, Cys-154, and Arg-221.

Belongs to the radical SAM superfamily. Biotin synthase family. Homodimer. Requires [4Fe-4S] cluster as cofactor. [2Fe-2S] cluster serves as cofactor.

It carries out the reaction (4R,5S)-dethiobiotin + (sulfur carrier)-SH + 2 reduced [2Fe-2S]-[ferredoxin] + 2 S-adenosyl-L-methionine = (sulfur carrier)-H + biotin + 2 5'-deoxyadenosine + 2 L-methionine + 2 oxidized [2Fe-2S]-[ferredoxin]. It participates in cofactor biosynthesis; biotin biosynthesis; biotin from 7,8-diaminononanoate: step 2/2. In terms of biological role, catalyzes the conversion of dethiobiotin (DTB) to biotin by the insertion of a sulfur atom into dethiobiotin via a radical-based mechanism. This is Biotin synthase from Helicobacter pylori (strain HPAG1).